We begin with the raw amino-acid sequence, 242 residues long: DNA-directed RNA polymerase III subunit rpc5 (242 aa).

Disordered regions lie at residues 1 to 22 and 153 to 172; these read MSFSEDQAMEEAKLRNDETEEQ and LKAAAGPSNSSSGTSTPRGP. The segment covering 155–172 has biased composition (low complexity); that stretch reads AAAGPSNSSSGTSTPRGP.

As to quaternary structure, component of the RNA polymerase III (Pol III) complex consisting of 17 subunits.

It is found in the cytoplasm. Its subcellular location is the nucleus. In terms of biological role, DNA-dependent RNA polymerase catalyzes the transcription of DNA into RNA using the four ribonucleoside triphosphates as substrates. Specific peripheric component of RNA polymerase III which synthesizes small RNAs, such as 5S rRNA and tRNAs. The RPC53/RPC4-RPC37/RPC5 subcomplex is required for terminator recognition and reinitiation. The polypeptide is DNA-directed RNA polymerase III subunit rpc5 (rpc37) (Schizosaccharomyces pombe (strain 972 / ATCC 24843) (Fission yeast)).